A 209-amino-acid polypeptide reads, in one-letter code: Xanthine phosphoribosyltransferase 1 (209 aa).

Serine 79 is subject to Phosphoserine.

Its subcellular location is the cytoplasm. Functionally, may act as a xanthine phosphoribosyltransferase involved in the synthesis of purine nucleotides. Such activity is however unclear in vivo. In Saccharomyces cerevisiae (strain ATCC 204508 / S288c) (Baker's yeast), this protein is Xanthine phosphoribosyltransferase 1 (XPT1).